A 299-amino-acid chain; its full sequence is Cytidine deaminase (299 aa).

CMP/dCMP-type deaminase domains follow at residues 56-176 and 194-299; these read SKIE…FGPK and LQGD…YIAV. A substrate-binding site is contributed by 97–99; the sequence is NQE. Histidine 110 is a Zn(2+) binding site. The active-site Proton donor is glutamate 112. 2 residues coordinate Zn(2+): cysteine 137 and cysteine 140.

Belongs to the cytidine and deoxycytidylate deaminase family. In terms of assembly, homodimer. The cofactor is Zn(2+).

It carries out the reaction cytidine + H2O + H(+) = uridine + NH4(+). The catalysed reaction is 2'-deoxycytidine + H2O + H(+) = 2'-deoxyuridine + NH4(+). Functionally, this enzyme scavenges exogenous and endogenous cytidine and 2'-deoxycytidine for UMP synthesis. The chain is Cytidine deaminase from Haemophilus ducreyi (strain 35000HP / ATCC 700724).